The primary structure comprises 248 residues: 14-3-3-like protein 2 (248 aa).

It belongs to the 14-3-3 family. As to quaternary structure, interacts with daf-16. Interacts with sir-2.1. Interacts with hcf-1.

It localises to the cytoplasm. It is found in the nucleus. Its function is as follows. Required for extension of lifespan by sir-2.1. Required to modulate lifespan, in concert with hcf-1, acting redundantly with 14-3-3-like protein par-5. Promotes nuclear export of yap-1. Negatively regulates the transcriptional activity of daf-16 by sequestering it to the cytoplasm. The protein is 14-3-3-like protein 2 of Caenorhabditis elegans.